The following is a 154-amino-acid chain: Transcriptional regulator MraZ (154 aa).

SpoVT-AbrB domains follow at residues 6 to 53 (NSEA…PENV) and 83 to 126 (VEVI…SKEI).

Belongs to the MraZ family. As to quaternary structure, forms oligomers.

It localises to the cytoplasm. The protein resides in the nucleoid. The chain is Transcriptional regulator MraZ from Phocaeicola vulgatus (strain ATCC 8482 / DSM 1447 / JCM 5826 / CCUG 4940 / NBRC 14291 / NCTC 11154) (Bacteroides vulgatus).